The following is a 296-amino-acid chain: tRNA-cytidine(32) 2-sulfurtransferase (296 aa).

Residues 72–77 (SGGKDS) carry the PP-loop motif motif. [4Fe-4S] cluster-binding residues include Cys-147, Cys-150, and Cys-238.

It belongs to the TtcA family. In terms of assembly, homodimer. Requires Mg(2+) as cofactor. [4Fe-4S] cluster is required as a cofactor.

The protein resides in the cytoplasm. The catalysed reaction is cytidine(32) in tRNA + S-sulfanyl-L-cysteinyl-[cysteine desulfurase] + AH2 + ATP = 2-thiocytidine(32) in tRNA + L-cysteinyl-[cysteine desulfurase] + A + AMP + diphosphate + H(+). It participates in tRNA modification. In terms of biological role, catalyzes the ATP-dependent 2-thiolation of cytidine in position 32 of tRNA, to form 2-thiocytidine (s(2)C32). The sulfur atoms are provided by the cysteine/cysteine desulfurase (IscS) system. The protein is tRNA-cytidine(32) 2-sulfurtransferase of Sinorhizobium fredii (strain NBRC 101917 / NGR234).